Here is a 179-residue protein sequence, read N- to C-terminus: GTP-dependent dephospho-CoA kinase (179 aa).

Residues aspartate 50, valine 51, valine 52, aspartate 69, lysine 71, and glutamate 126 each coordinate GTP.

It belongs to the GTP-dependent DPCK family.

The enzyme catalyses 3'-dephospho-CoA + GTP = GDP + CoA + H(+). Its pathway is cofactor biosynthesis; coenzyme A biosynthesis. Its function is as follows. Catalyzes the GTP-dependent phosphorylation of the 3'-hydroxyl group of dephosphocoenzyme A to form coenzyme A (CoA). The polypeptide is GTP-dependent dephospho-CoA kinase (Pyrococcus horikoshii (strain ATCC 700860 / DSM 12428 / JCM 9974 / NBRC 100139 / OT-3)).